The following is a 196-amino-acid chain: Large ribosomal subunit protein uL18 (196 aa).

It belongs to the universal ribosomal protein uL18 family. Part of the 50S ribosomal subunit. Contacts the 5S and 23S rRNAs.

This is one of the proteins that bind and probably mediate the attachment of the 5S RNA into the large ribosomal subunit, where it forms part of the central protuberance. This chain is Large ribosomal subunit protein uL18, found in Desulfurococcus amylolyticus (strain DSM 18924 / JCM 16383 / VKM B-2413 / 1221n) (Desulfurococcus kamchatkensis).